The sequence spans 465 residues: Ribulose bisphosphate carboxylase large chain (465 aa).

Lysine 4 is modified (N6,N6,N6-trimethyllysine). Positions 113 and 163 each coordinate substrate. Lysine 165 functions as the Proton acceptor in the catalytic mechanism. Lysine 167 lines the substrate pocket. 3 residues coordinate Mg(2+): lysine 191, aspartate 193, and glutamate 194. Lysine 191 is modified (N6-carboxylysine). The Proton acceptor role is filled by histidine 284. Residues arginine 285, histidine 317, and serine 369 each coordinate substrate.

This sequence belongs to the RuBisCO large chain family. Type I subfamily. In terms of assembly, heterohexadecamer of 8 large chains and 8 small chains; disulfide-linked. The disulfide link is formed within the large subunit homodimers. Mg(2+) is required as a cofactor. Post-translationally, the disulfide bond which can form in the large chain dimeric partners within the hexadecamer appears to be associated with oxidative stress and protein turnover.

It localises to the plastid. The protein resides in the chloroplast. It carries out the reaction 2 (2R)-3-phosphoglycerate + 2 H(+) = D-ribulose 1,5-bisphosphate + CO2 + H2O. It catalyses the reaction D-ribulose 1,5-bisphosphate + O2 = 2-phosphoglycolate + (2R)-3-phosphoglycerate + 2 H(+). In terms of biological role, ruBisCO catalyzes two reactions: the carboxylation of D-ribulose 1,5-bisphosphate, the primary event in carbon dioxide fixation, as well as the oxidative fragmentation of the pentose substrate in the photorespiration process. Both reactions occur simultaneously and in competition at the same active site. In Byrsonima crassifolia (Cajuil cimarron), this protein is Ribulose bisphosphate carboxylase large chain.